We begin with the raw amino-acid sequence, 158 residues long: MRAPMTSKGAQRLREELDHLKSVKRPAVITAIAEARAHGDLKENAEYHAAREQQSFIEGRIKQLEGELSHAEIIDITKLAAGTKIVFGATVTLADTETDEEKRYQIVGDLEADIKLGLIAISSPLARALIGKLEGDSVTIDAPAGQREYEVVSVAYLD.

Residues 45 to 72 (AEYHAAREQQSFIEGRIKQLEGELSHAE) adopt a coiled-coil conformation.

It belongs to the GreA/GreB family.

In terms of biological role, necessary for efficient RNA polymerase transcription elongation past template-encoded arresting sites. The arresting sites in DNA have the property of trapping a certain fraction of elongating RNA polymerases that pass through, resulting in locked ternary complexes. Cleavage of the nascent transcript by cleavage factors such as GreA or GreB allows the resumption of elongation from the new 3'terminus. GreA releases sequences of 2 to 3 nucleotides. This chain is Transcription elongation factor GreA, found in Xanthomonas campestris pv. campestris (strain ATCC 33913 / DSM 3586 / NCPPB 528 / LMG 568 / P 25).